The chain runs to 172 residues: Large ribosomal subunit protein uL10 (172 aa).

The protein belongs to the universal ribosomal protein uL10 family. Part of the ribosomal stalk of the 50S ribosomal subunit. The N-terminus interacts with L11 and the large rRNA to form the base of the stalk. The C-terminus forms an elongated spine to which L12 dimers bind in a sequential fashion forming a multimeric L10(L12)X complex.

Functionally, forms part of the ribosomal stalk, playing a central role in the interaction of the ribosome with GTP-bound translation factors. The polypeptide is Large ribosomal subunit protein uL10 (Chlamydia trachomatis serovar A (strain ATCC VR-571B / DSM 19440 / HAR-13)).